Reading from the N-terminus, the 422-residue chain is Serine hydroxymethyltransferase 2 (422 aa).

Residues leucine 121 and 125 to 127 (GHL) contribute to the (6S)-5,6,7,8-tetrahydrofolate site. Lysine 230 carries the N6-(pyridoxal phosphate)lysine modification.

It belongs to the SHMT family. Homodimer. Requires pyridoxal 5'-phosphate as cofactor.

It localises to the cytoplasm. The enzyme catalyses (6R)-5,10-methylene-5,6,7,8-tetrahydrofolate + glycine + H2O = (6S)-5,6,7,8-tetrahydrofolate + L-serine. The protein operates within one-carbon metabolism; tetrahydrofolate interconversion. Its pathway is amino-acid biosynthesis; glycine biosynthesis; glycine from L-serine: step 1/1. Catalyzes the reversible interconversion of serine and glycine with tetrahydrofolate (THF) serving as the one-carbon carrier. This reaction serves as the major source of one-carbon groups required for the biosynthesis of purines, thymidylate, methionine, and other important biomolecules. Also exhibits THF-independent aldolase activity toward beta-hydroxyamino acids, producing glycine and aldehydes, via a retro-aldol mechanism. This chain is Serine hydroxymethyltransferase 2, found in Agrobacterium fabrum (strain C58 / ATCC 33970) (Agrobacterium tumefaciens (strain C58)).